The following is a 487-amino-acid chain: N-succinylglutamate 5-semialdehyde dehydrogenase (487 aa).

221–226 (GSSRTG) provides a ligand contact to NAD(+). Catalysis depends on residues E244 and C278.

This sequence belongs to the aldehyde dehydrogenase family. AstD subfamily.

The enzyme catalyses N-succinyl-L-glutamate 5-semialdehyde + NAD(+) + H2O = N-succinyl-L-glutamate + NADH + 2 H(+). It functions in the pathway amino-acid degradation; L-arginine degradation via AST pathway; L-glutamate and succinate from L-arginine: step 4/5. Functionally, catalyzes the NAD-dependent reduction of succinylglutamate semialdehyde into succinylglutamate. This is N-succinylglutamate 5-semialdehyde dehydrogenase from Pseudomonas putida (strain ATCC 700007 / DSM 6899 / JCM 31910 / BCRC 17059 / LMG 24140 / F1).